A 420-amino-acid polypeptide reads, in one-letter code: rRNA methyltransferase 3, mitochondrial (420 aa).

The N-terminal 40 residues, Met-1–Val-40, are a transit peptide targeting the mitochondrion. Residues Glu-49–Glu-88 form a disordered region. The span at Glu-69–Ala-80 shows a compositional bias: basic and acidic residues. Residues Gly-356, Ile-380, and Leu-389 each contribute to the S-adenosyl-L-methionine site.

The protein belongs to the class IV-like SAM-binding methyltransferase superfamily. RNA methyltransferase TrmH family. Expressed at same level in normal liver and hepatocarcinoma.

It is found in the mitochondrion. It carries out the reaction guanosine(1370) in 16S rRNA + S-adenosyl-L-methionine = 2'-O-methylguanosine(1370) in 16S rRNA + S-adenosyl-L-homocysteine + H(+). In terms of biological role, S-adenosyl-L-methionine-dependent 2'-O-ribose methyltransferase that catalyzes the formation of 2'-O-methylguanosine at position 1370 (Gm1370) in the 16S mitochondrial large subunit ribosomal RNA (mtLSU rRNA), a conserved modification in the peptidyl transferase domain of the mtLSU rRNA. Also required for formation of 2'-O-methyluridine at position 1369 (Um1369) mediated by MRM2. This Homo sapiens (Human) protein is rRNA methyltransferase 3, mitochondrial.